A 965-amino-acid chain; its full sequence is Serine/threonine-protein kinase tousled-like 1 (965 aa).

Disordered stretches follow at residues 1–22 (MSML…GGER), 35–72 (PQNK…ATGD), 95–120 (QNSS…TRSS), 172–292 (NHQQ…KQER), 320–402 (QNQG…QSGR), and 538–576 (RKPL…DDAI). Residues 10–21 (VAGGGSSSGGGE) show a composition bias toward gly residues. A compositionally biased stretch (polar residues) spans 42-52 (TVQSSGSSSNH). Positions 172–231 (NHQQQMQQMHYHQQQQQYQQQQAQHHQMYAPQIQQQQQQPQQQSQQQSAQQPQQSSAALQ) are enriched in low complexity. Polar residues-rich tracts occupy residues 233-244 (VNESSNLSSAGS) and 320-341 (QNQG…SYDS). Low complexity predominate over residues 342-355 (QQQQPQMNQHEMQN). Positions 365–381 (LGVNNRGTPTPTQQQHY) are enriched in polar residues. Low complexity predominate over residues 382–401 (SSDSNSNSNQSPPGQGNQSG). Over residues 552–572 (AVNSQNDSNGMQPSTSSNTNG) the composition is skewed to polar residues. Residue S634 is modified to Phosphoserine. The Protein kinase domain occupies 651–928 (YLMLNLLGKG…VFELAKHELF (278 aa)). Residues 657–665 (LGKGGFSEV) and K680 contribute to the ATP site. Residue D781 is the Proton acceptor of the active site.

This sequence belongs to the protein kinase superfamily. Ser/Thr protein kinase family. Interacts with air-2. Autophosphorylates in vitro. Phosphorylation on Ser-634 by air-2 enhances catalytic activity.

Its subcellular location is the nucleus. The enzyme catalyses L-seryl-[protein] + ATP = O-phospho-L-seryl-[protein] + ADP + H(+). It carries out the reaction L-threonyl-[protein] + ATP = O-phospho-L-threonyl-[protein] + ADP + H(+). Essential for appropriate transcription during embryonic development. May act during transcription elongation to activate the RNA polymerase II large subunit (ama-1) by phosphorylating the Ser-2 residues of the C-terminal domain 7-residue repeats. Does not phosphorylate histone H3. The polypeptide is Serine/threonine-protein kinase tousled-like 1 (tlk-1) (Caenorhabditis elegans).